Reading from the N-terminus, the 221-residue chain is Thiamine-phosphate synthase (221 aa).

Residues 44 to 48 (QLRLK) and N80 contribute to the 4-amino-2-methyl-5-(diphosphooxymethyl)pyrimidine site. Positions 81 and 100 each coordinate Mg(2+). T119 contributes to the 4-amino-2-methyl-5-(diphosphooxymethyl)pyrimidine binding site. A 2-[(2R,5Z)-2-carboxy-4-methylthiazol-5(2H)-ylidene]ethyl phosphate-binding site is contributed by 146–148 (TTT). K149 is a binding site for 4-amino-2-methyl-5-(diphosphooxymethyl)pyrimidine. G176 provides a ligand contact to 2-[(2R,5Z)-2-carboxy-4-methylthiazol-5(2H)-ylidene]ethyl phosphate.

The protein belongs to the thiamine-phosphate synthase family. Mg(2+) is required as a cofactor.

It catalyses the reaction 2-[(2R,5Z)-2-carboxy-4-methylthiazol-5(2H)-ylidene]ethyl phosphate + 4-amino-2-methyl-5-(diphosphooxymethyl)pyrimidine + 2 H(+) = thiamine phosphate + CO2 + diphosphate. The enzyme catalyses 2-(2-carboxy-4-methylthiazol-5-yl)ethyl phosphate + 4-amino-2-methyl-5-(diphosphooxymethyl)pyrimidine + 2 H(+) = thiamine phosphate + CO2 + diphosphate. The catalysed reaction is 4-methyl-5-(2-phosphooxyethyl)-thiazole + 4-amino-2-methyl-5-(diphosphooxymethyl)pyrimidine + H(+) = thiamine phosphate + diphosphate. The protein operates within cofactor biosynthesis; thiamine diphosphate biosynthesis; thiamine phosphate from 4-amino-2-methyl-5-diphosphomethylpyrimidine and 4-methyl-5-(2-phosphoethyl)-thiazole: step 1/1. Functionally, condenses 4-methyl-5-(beta-hydroxyethyl)thiazole monophosphate (THZ-P) and 2-methyl-4-amino-5-hydroxymethyl pyrimidine pyrophosphate (HMP-PP) to form thiamine monophosphate (TMP). The sequence is that of Thiamine-phosphate synthase from Hyphomonas neptunium (strain ATCC 15444).